Reading from the N-terminus, the 175-residue chain is Microfibril-associated glycoprotein 3 (175 aa).

The Cytoplasmic segment spans residues 1–175 (FRTEGAEKLQ…KDGSFESCQL (175 aa)). The disordered stretch occupies residues 85-175 (KERPALNAQD…KDGSFESCQL (91 aa)). Residues 145 to 175 (QDSSHFSPPDDTGSTESNSNYKDGSFESCQL) show a composition bias toward polar residues.

In terms of processing, glycosylated.

The protein localises to the cell membrane. In terms of biological role, component of the elastin-associated microfibrils. The sequence is that of Microfibril-associated glycoprotein 3 (MFAP3) from Bos taurus (Bovine).